A 465-amino-acid polypeptide reads, in one-letter code: Hepatocyte nuclear factor 6 (465 aa).

Disordered regions lie at residues 15–84 (GVSH…GPLH) and 119–141 (SDKF…HQRL). Over residues 123-140 (PHHHHHHHHHHHPHHHQR) the composition is skewed to basic residues. Residues 283-369 (GSNSGQMEEI…QRMSALRLAA (87 aa)) constitute a DNA-binding region (CUT). The segment at residues 385-444 (PKKPRLVFTDVQRRTLHAIFKENKRPSKELQITISQQLGLELSTVSNFFMNARRRSLDKW) is a DNA-binding region (homeobox). Residues 443-465 (KWQDEGGSNSGSSSSSSSTCTKA) form a disordered region. Positions 448-465 (GGSNSGSSSSSSSTCTKA) are enriched in low complexity.

This sequence belongs to the CUT homeobox family. Binds DNA as a monomer.

The protein localises to the nucleus. Transcriptional activator. Binds the consensus sequence 5'-DHWATTGAYTWWD-3' on a variety of gene promoters such as those of HNF3B and TTR. Important for liver genes transcription. Stimulates the expression of Onecut3 in the developing endoderm. This chain is Hepatocyte nuclear factor 6 (Onecut1), found in Mus musculus (Mouse).